A 611-amino-acid polypeptide reads, in one-letter code: Homeobox protein BEL1 homolog (611 aa).

Disordered stretches follow at residues 63-87 (QIRM…DQNQ), 101-133 (VNND…NPTS), 141-160 (LRPQ…TQHQ), and 174-195 (SHHQ…FQIG). The segment covering 118–133 (PSQGLSLSLSSSNPTS) has biased composition (low complexity). Positions 174 to 183 (SHHQNNNNNN) are enriched in low complexity. An SR/KY domain region spans residues 197-213 (SKYLSPAQELLSEFCSL). The interval 225–263 (MKHKKKQKGKQQEEWDTSHHSNNDQHDQSATTSSKKHVP) is disordered. Positions 234-251 (KQQEEWDTSHHSNNDQHD) are enriched in basic and acidic residues. Residues 269–340 (EFMELQKRKA…CLKDGLVGQI (72 aa)) are BELL domain. Residues 275-290 (KRKAKLLSMLEELKRR) carry the Bipartite nuclear localization motif. The segment at residues 391–453 (PWRPQRGLPE…NARVRLWKPM (63 aa)) is a DNA-binding region (homeobox).

It belongs to the TALE/BELL homeobox family. May form heterodimeric complexes with TALE/KNOX proteins STM, KNAT1/BP, KNAT2 and KNAT5. Interacts with AG-SEP1 and AG-SEP3 dimers. Interacts with KNATM, isoform KNATM-B. Interacts with BZIP30. Expressed in both floral and vegetative tissues.

The protein resides in the nucleus. Plays a major role in ovule patterning and in determination of integument identity via its interaction with MADS-box factors. Formation of complex with AG-SEP dimers negatively regulates the carpel identity process and favors the maintenance of ovule identity. BEL1-STM complex maintains the indeterminacy of the inflorescence meristem. Required, with SPL, for cytokinin-induced PIN1 expression in ovules. The polypeptide is Homeobox protein BEL1 homolog (BEL1) (Arabidopsis thaliana (Mouse-ear cress)).